The primary structure comprises 216 residues: Acetate CoA-transferase subunit beta (216 aa).

The active site involves glutamate 46.

Belongs to the 3-oxoacid CoA-transferase subunit B family. As to quaternary structure, heterotetramer composed of two alpha subunits (AtoD) and two beta subunits (AtoA).

The protein resides in the cytoplasm. It carries out the reaction an acyl-CoA + acetate = a carboxylate + acetyl-CoA. The catalysed reaction is acetoacetate + acetyl-CoA = acetoacetyl-CoA + acetate. The enzyme catalyses butanoate + acetyl-CoA = butanoyl-CoA + acetate. It catalyses the reaction acetoacetate + butanoyl-CoA = acetoacetyl-CoA + butanoate. Its pathway is lipid metabolism; short-chain fatty acid metabolism. With respect to regulation, inhibited by p-chloromercuribenzoate. Its function is as follows. Coenzyme A transferase which is involved in short-chain fatty acid degradation and catalyzes the activation of short-chain fatty acids to their respective CoA thiolesters. During acetoacetate degradation, catalyzes the transfer of CoA from acetyl-CoA to acetoacetate by a mechanism involving a covalent enzyme-CoA compound as a reaction intermediate. Utilizes a variety of short chain acyl-CoA and carboxylic acid substrates but exhibits maximal activity with normal and 3-keto substrates. The protein is Acetate CoA-transferase subunit beta of Escherichia coli (strain K12).